The sequence spans 396 residues: S-adenosylmethionine synthase (396 aa).

Position 16 (His-16) interacts with ATP. Asp-18 lines the Mg(2+) pocket. Glu-44 lines the K(+) pocket. Glu-57 and Gln-100 together coordinate L-methionine. Residues 100–110 (QSVDIAQGVDR) are flexible loop. ATP contacts are provided by residues 165-167 (DAK), 231-232 (KF), Asp-240, 246-247 (RK), Ala-263, and Lys-267. Asp-240 is a binding site for L-methionine. Lys-271 lines the L-methionine pocket.

The protein belongs to the AdoMet synthase family. As to quaternary structure, homotetramer; dimer of dimers. The cofactor is Mg(2+). Requires K(+) as cofactor.

The protein resides in the cytoplasm. The catalysed reaction is L-methionine + ATP + H2O = S-adenosyl-L-methionine + phosphate + diphosphate. It participates in amino-acid biosynthesis; S-adenosyl-L-methionine biosynthesis; S-adenosyl-L-methionine from L-methionine: step 1/1. Functionally, catalyzes the formation of S-adenosylmethionine (AdoMet) from methionine and ATP. The overall synthetic reaction is composed of two sequential steps, AdoMet formation and the subsequent tripolyphosphate hydrolysis which occurs prior to release of AdoMet from the enzyme. The polypeptide is S-adenosylmethionine synthase (Marinobacter nauticus (strain ATCC 700491 / DSM 11845 / VT8) (Marinobacter aquaeolei)).